A 270-amino-acid polypeptide reads, in one-letter code: Putative pyruvate, phosphate dikinase regulatory protein (270 aa).

151–158 contacts ADP; that stretch reads GVSRTSKT.

The protein belongs to the pyruvate, phosphate/water dikinase regulatory protein family. PDRP subfamily.

It carries out the reaction N(tele)-phospho-L-histidyl/L-threonyl-[pyruvate, phosphate dikinase] + ADP = N(tele)-phospho-L-histidyl/O-phospho-L-threonyl-[pyruvate, phosphate dikinase] + AMP + H(+). The enzyme catalyses N(tele)-phospho-L-histidyl/O-phospho-L-threonyl-[pyruvate, phosphate dikinase] + phosphate + H(+) = N(tele)-phospho-L-histidyl/L-threonyl-[pyruvate, phosphate dikinase] + diphosphate. Functionally, bifunctional serine/threonine kinase and phosphorylase involved in the regulation of the pyruvate, phosphate dikinase (PPDK) by catalyzing its phosphorylation/dephosphorylation. This is Putative pyruvate, phosphate dikinase regulatory protein from Bacillus velezensis (strain DSM 23117 / BGSC 10A6 / LMG 26770 / FZB42) (Bacillus amyloliquefaciens subsp. plantarum).